A 541-amino-acid chain; its full sequence is uncharacterized protein (541 aa).

5 helical membrane passes run 4-23 (FVAN…LAIG), 30-47 (FSLG…FAAV), 57-79 (VYIL…AFFA), 91-113 (LAIT…IHLN), and 156-178 (LVAY…GLCA). RCK C-terminal domains follow at residues 187–271 (QEAH…VLGD) and 273–354 (LPGD…LFGD). The next 5 membrane-spanning stretches (helical) occupy residues 362-384 (FNLF…EVPL), 389-411 (ALSL…VGRS), 424-446 (LALR…GASF), 456-478 (LTII…VVGY), and 516-538 (LGYT…VVLF).

It belongs to the AAE transporter (TC 2.A.81) family.

The protein localises to the cell membrane. This is an uncharacterized protein from Corynebacterium diphtheriae (strain ATCC 700971 / NCTC 13129 / Biotype gravis).